We begin with the raw amino-acid sequence, 385 residues long: Na(+)/H(+) antiporter NhaA (385 aa).

11 helical membrane passes run 9–29 (YSAI…NVLD), 45–65 (IFGL…VFFF), 87–107 (IIPG…YLSV), 114–134 (GWPV…AIFG), 155–175 (AGIV…WIIV), 198–218 (TFLI…SVYQ), 220–235 (GIHA…IMLN), 245–265 (ALEP…AAMV), 282–302 (ILLG…IIAL), 312–332 (FFNL…SLLM), and 345–365 (QGVI…IILM).

This sequence belongs to the NhaA Na(+)/H(+) (TC 2.A.33) antiporter family.

It localises to the cell membrane. It carries out the reaction Na(+)(in) + 2 H(+)(out) = Na(+)(out) + 2 H(+)(in). Na(+)/H(+) antiporter that extrudes sodium in exchange for external protons. This chain is Na(+)/H(+) antiporter NhaA, found in Tropheryma whipplei (strain TW08/27) (Whipple's bacillus).